We begin with the raw amino-acid sequence, 487 residues long: Chromosomal replication initiator protein DnaA (487 aa).

The tract at residues 1 to 79 (MPNSMWHQCL…QAPRVMMKVG (79 aa)) is domain I, interacts with DnaA modulators. The segment at 78–138 (VGSAPKPTDP…PAPKAQAERR (61 aa)) is disordered. Residues 79 to 150 (GSAPKPTDPV…QVEGDIKHQS (72 aa)) are domain II. The segment at 151-367 (FLNETFTFDT…GALRLVIANA (217 aa)) is domain III, AAA+ region. Residues Gly195, Gly197, Lys198, and Thr199 each contribute to the ATP site. A domain IV, binds dsDNA region spans residues 368-487 (HFTGSEITPP…YQNFMRLLTT (120 aa)).

The protein belongs to the DnaA family. As to quaternary structure, oligomerizes as a right-handed, spiral filament on DNA at oriC.

It localises to the cytoplasm. In terms of biological role, plays an essential role in the initiation and regulation of chromosomal replication. ATP-DnaA binds to the origin of replication (oriC) to initiate formation of the DNA replication initiation complex once per cell cycle. Binds the DnaA box (a 9 base pair repeat at the origin) and separates the double-stranded (ds)DNA. Forms a right-handed helical filament on oriC DNA; dsDNA binds to the exterior of the filament while single-stranded (ss)DNA is stabiized in the filament's interior. The ATP-DnaA-oriC complex binds and stabilizes one strand of the AT-rich DNA unwinding element (DUE), permitting loading of DNA polymerase. After initiation quickly degrades to an ADP-DnaA complex that is not apt for DNA replication. Binds acidic phospholipids. This chain is Chromosomal replication initiator protein DnaA, found in Marinobacter nauticus (strain ATCC 700491 / DSM 11845 / VT8) (Marinobacter aquaeolei).